Consider the following 451-residue polypeptide: Trigger factor (451 aa).

Positions 173-258 (GDRVTLDFVG…LKKIEWAHLP (86 aa)) constitute a PPIase FKBP-type domain.

It belongs to the FKBP-type PPIase family. Tig subfamily.

It is found in the cytoplasm. It catalyses the reaction [protein]-peptidylproline (omega=180) = [protein]-peptidylproline (omega=0). Functionally, involved in protein export. Acts as a chaperone by maintaining the newly synthesized protein in an open conformation. Functions as a peptidyl-prolyl cis-trans isomerase. The chain is Trigger factor from Cupriavidus necator (strain ATCC 17699 / DSM 428 / KCTC 22496 / NCIMB 10442 / H16 / Stanier 337) (Ralstonia eutropha).